Reading from the N-terminus, the 109-residue chain is Cell division protein ZapA (109 aa).

Residues 22–99 are a coiled coil; sequence EQQDALNMAA…IEQALLEQGR (78 aa).

This sequence belongs to the ZapA family. Type 1 subfamily. As to quaternary structure, homodimer. Interacts with FtsZ.

Its subcellular location is the cytoplasm. In terms of biological role, activator of cell division through the inhibition of FtsZ GTPase activity, therefore promoting FtsZ assembly into bundles of protofilaments necessary for the formation of the division Z ring. It is recruited early at mid-cell but it is not essential for cell division. The sequence is that of Cell division protein ZapA from Yersinia pseudotuberculosis serotype O:1b (strain IP 31758).